A 441-amino-acid polypeptide reads, in one-letter code: Arginine biosynthesis bifunctional protein ArgJ, mitochondrial (441 aa).

The substrate site is built by T177, K204, T215, E301, N436, and S441. T215 functions as the Nucleophile in the catalytic mechanism.

This sequence belongs to the ArgJ family. As to quaternary structure, heterodimer of an alpha and a beta chain. The alpha and beta chains are autoproteolytically processed from a single precursor protein within the mitochondrion.

The protein resides in the mitochondrion matrix. It carries out the reaction N(2)-acetyl-L-ornithine + L-glutamate = N-acetyl-L-glutamate + L-ornithine. The catalysed reaction is L-glutamate + acetyl-CoA = N-acetyl-L-glutamate + CoA + H(+). Its pathway is amino-acid biosynthesis; L-arginine biosynthesis; L-ornithine and N-acetyl-L-glutamate from L-glutamate and N(2)-acetyl-L-ornithine (cyclic): step 1/1. It participates in amino-acid biosynthesis; L-arginine biosynthesis; N(2)-acetyl-L-ornithine from L-glutamate: step 1/4. Catalyzes two activities which are involved in the cyclic version of arginine biosynthesis: the synthesis of acetylglutamate from glutamate and acetyl-CoA, and of ornithine by transacetylation between acetylornithine and glutamate. The chain is Arginine biosynthesis bifunctional protein ArgJ, mitochondrial from Lachancea thermotolerans (strain ATCC 56472 / CBS 6340 / NRRL Y-8284) (Yeast).